The sequence spans 299 residues: Acetyl-coenzyme A carboxylase carboxyl transferase subunit beta (299 aa).

The CoA carboxyltransferase N-terminal domain occupies 25-294 (VWTKCTSCEQ…PFVEPELIQE (270 aa)). The Zn(2+) site is built by Cys29, Cys32, Cys48, and Cys51. The C4-type zinc-finger motif lies at 29–51 (CTSCEQVLYRDELKRHLEVCPKC).

It belongs to the AccD/PCCB family. In terms of assembly, acetyl-CoA carboxylase is a heterohexamer composed of biotin carboxyl carrier protein (AccB), biotin carboxylase (AccC) and two subunits each of ACCase subunit alpha (AccA) and ACCase subunit beta (AccD). Requires Zn(2+) as cofactor.

It localises to the cytoplasm. It catalyses the reaction N(6)-carboxybiotinyl-L-lysyl-[protein] + acetyl-CoA = N(6)-biotinyl-L-lysyl-[protein] + malonyl-CoA. It functions in the pathway lipid metabolism; malonyl-CoA biosynthesis; malonyl-CoA from acetyl-CoA: step 1/1. Its function is as follows. Component of the acetyl coenzyme A carboxylase (ACC) complex. Biotin carboxylase (BC) catalyzes the carboxylation of biotin on its carrier protein (BCCP) and then the CO(2) group is transferred by the transcarboxylase to acetyl-CoA to form malonyl-CoA. The polypeptide is Acetyl-coenzyme A carboxylase carboxyl transferase subunit beta (Histophilus somni (strain 129Pt) (Haemophilus somnus)).